A 115-amino-acid chain; its full sequence is Toxin-like structure LSTX-R1 (115 aa).

The N-terminal stretch at 1-18 (MKLSLIIIATSLVIAVVA) is a signal peptide. The propeptide occupies 19–51 (FPSKDSAATDFDKTESLENVEERVETALDERPR).

This sequence belongs to the neurotoxin 25 family. F7 subfamily. Post-translationally, contains 4 disulfide bonds. Expressed by the venom gland.

Its subcellular location is the secreted. The protein is Toxin-like structure LSTX-R1 of Lycosa singoriensis (Wolf spider).